Reading from the N-terminus, the 388-residue chain is STE20-related kinase adapter protein strd-1 (388 aa).

Positions 52-335 (YDCVRYMGTC…ASDLKSSAWL (284 aa)) constitute a Protein kinase domain. ATP-binding positions include 58 to 66 (MGTCNGGQI) and Lys-82.

This sequence belongs to the protein kinase superfamily. STE Ser/Thr protein kinase family. STE20 subfamily. In terms of assembly, interacts with sad-1. Interacts with par-4. As to expression, expressed in nervous system, pharynx and excretory canal. Expressed in germline.

The protein localises to the perikaryon. The protein resides in the nucleus. It is found in the cell projection. Its subcellular location is the dendrite. It localises to the axon. The protein localises to the synapse. The protein resides in the cytoplasm. It is found in the cell cortex. Functionally, pseudokinase which may act as an adapter for kinases sad-1 and par-4 and thereby is involved in several developmental processes. Regulates cell-autonomously both neuronal polarity and synaptic organization when bound to sad-1. Required for sad-1 localization to synapses. Required to establish germline stem cell (GSC) quiescence during dauer development, to promote cell shedding during embryogenesis and to control asymmetric cell division of the Q.p neuroblast lineage, probably when bound to par-4. May be involved in maintaining the integrity of the early embryonic cortex when bound to par-4. This Caenorhabditis elegans protein is STE20-related kinase adapter protein strd-1.